The following is a 264-amino-acid chain: Glutamate 5-kinase (264 aa).

Lys-15 contributes to the ATP binding site. Residues Ser-55, Asp-142, and Asn-154 each coordinate substrate. Residues 174–175 (SD) and 216–222 (TGGIATK) each bind ATP.

This sequence belongs to the glutamate 5-kinase family.

The protein localises to the cytoplasm. The catalysed reaction is L-glutamate + ATP = L-glutamyl 5-phosphate + ADP. It participates in amino-acid biosynthesis; L-proline biosynthesis; L-glutamate 5-semialdehyde from L-glutamate: step 1/2. Functionally, catalyzes the transfer of a phosphate group to glutamate to form L-glutamate 5-phosphate. In Alkaliphilus metalliredigens (strain QYMF), this protein is Glutamate 5-kinase.